The sequence spans 346 residues: NADH-ubiquinone oxidoreductase chain 2 (346 aa).

The next 9 helical transmembrane spans lie at 7–27, 59–79, 93–115, 151–171, 178–198, 200–220, 242–262, 275–294, and 325–345; these read AIIT…NHWI, YFLT…MNMW, ISCT…HFWF, TTLL…GGLN, IMAF…TLSP, ILLL…LMIN, TMML…GFAP, LSMF…YFYL, and LATI…LKAI.

It belongs to the complex I subunit 2 family.

It localises to the mitochondrion inner membrane. The enzyme catalyses a ubiquinone + NADH + 5 H(+)(in) = a ubiquinol + NAD(+) + 4 H(+)(out). Functionally, core subunit of the mitochondrial membrane respiratory chain NADH dehydrogenase (Complex I) that is believed to belong to the minimal assembly required for catalysis. Complex I functions in the transfer of electrons from NADH to the respiratory chain. The immediate electron acceptor for the enzyme is believed to be ubiquinone. The sequence is that of NADH-ubiquinone oxidoreductase chain 2 (MT-ND2) from Pelomedusa subrufa (African side-necked turtle).